The following is a 166-amino-acid chain: Small ribosomal subunit protein uS5 (166 aa).

Residues 11-74 (FLEKLIAVNR…EKARRNMVDV (64 aa)) enclose the S5 DRBM domain.

Belongs to the universal ribosomal protein uS5 family. As to quaternary structure, part of the 30S ribosomal subunit. Contacts proteins S4 and S8.

With S4 and S12 plays an important role in translational accuracy. Functionally, located at the back of the 30S subunit body where it stabilizes the conformation of the head with respect to the body. The protein is Small ribosomal subunit protein uS5 of Alteromonas mediterranea (strain DSM 17117 / CIP 110805 / LMG 28347 / Deep ecotype).